Reading from the N-terminus, the 195-residue chain is L-rhamnose-binding lectin CSL3 (195 aa).

SUEL-type lectin domains are found at residues Ala1–Val95 and Ile105–Asp195.

Functionally, L-rhamnose binding lectin. Has hemagglutinating activity towards rabbit erythrocytes, human type A erythrocytes, human type B erythrocytes, human type O erythrocytes and sheep erythrocytes. Hemagglutinating activity is inhibited by smooth-type lipopolysaccharide (LPS) from S.flexneri 1A, A.salmonicida and E.coli K12, but not by rough-type LPS from S.flexneri, E.coli K12 and E.coli EH100. Agglutinates E.coli K12 and B.subtilis. This chain is L-rhamnose-binding lectin CSL3, found in Oncorhynchus keta (Chum salmon).